A 526-amino-acid chain; its full sequence is MSTAVRPDEVSSILRKQLAGFESEADVYDVGTVLQVGDGIARIYGLSKVAAGELLEFPHNVMGMALNLEEDNVGAVLFGESNAVKEGDTVKRTNILASIPVGEAMLGRVINPLGEPIDGKGPINTDIRLPLERRAPGVIFRKSVHEPLQTGLKAIDAMIPIGRGQRELIIGDRQTGKTAVALDTIINQKGKGVQCIYVAIGLKGSTVAQVVNTLEKYGAMEYTTVVSATASDPAPLQFIAPFAGATIGEFFRDTGRHALVVYDDLSKQAVAYRQLSLLLRRPPGREAYPGDVFYLHSRLLERAAKITDDIEVAKKMNDLPEPLKPLVKGGGSLTALPVIETQAGDVSAYIPTNVISITDGQIFLESNLFNAGQRPAINVGISVSRVGGAAQIKAMKKVAGTLRLDLAQFRELEAFSKFGSDLDKSTKAQLDRGARLVEILKQGQYIPMPVEKQVAIIFIGTQGLLDSVDLKQVRRFEEEFLAMLEQKHPEILSSIAEKGTLESDIASKLKELGEKYVASFKEKSKA.

171–178 (GDRQTGKT) serves as a coordination point for ATP.

It belongs to the ATPase alpha/beta chains family. As to quaternary structure, F-type ATPases have 2 components, CF(1) - the catalytic core - and CF(0) - the membrane proton channel. CF(1) has five subunits: alpha(3), beta(3), gamma(1), delta(1), epsilon(1). CF(0) has four main subunits: a(1), b(1), b'(1) and c(9-12).

It localises to the cell inner membrane. The catalysed reaction is ATP + H2O + 4 H(+)(in) = ADP + phosphate + 5 H(+)(out). Produces ATP from ADP in the presence of a proton gradient across the membrane. The alpha chain is a regulatory subunit. The sequence is that of ATP synthase subunit alpha from Chlorobaculum tepidum (strain ATCC 49652 / DSM 12025 / NBRC 103806 / TLS) (Chlorobium tepidum).